A 189-amino-acid polypeptide reads, in one-letter code: Interferon alpha-1 (189 aa).

An N-terminal signal peptide occupies residues 1–23; the sequence is MAPAWSLLLALLLLSCNAICSLG. Cystine bridges form between C24/C122 and C52/C162.

This sequence belongs to the alpha/beta interferon family. In terms of assembly, interacts with CR2.

The protein resides in the secreted. Functionally, produced by macrophages, IFN-alpha have antiviral activities. Interferon stimulates the production of two enzymes: a protein kinase and an oligoadenylate synthetase. This chain is Interferon alpha-1, found in Bos taurus (Bovine).